The chain runs to 84 residues: Large ribosomal subunit protein bL31B (84 aa).

The protein belongs to the bacterial ribosomal protein bL31 family. Type B subfamily. In terms of assembly, part of the 50S ribosomal subunit.

The sequence is that of Large ribosomal subunit protein bL31B from Bacteroides thetaiotaomicron (strain ATCC 29148 / DSM 2079 / JCM 5827 / CCUG 10774 / NCTC 10582 / VPI-5482 / E50).